A 319-amino-acid chain; its full sequence is Coproporphyrin III ferrochelatase 2 (319 aa).

Fe-coproporphyrin III is bound by residues tyrosine 13, arginine 30, 46-47 (RY), serine 54, and tyrosine 125. Residues histidine 181 and glutamate 262 each contribute to the Fe(2+) site.

The protein belongs to the ferrochelatase family.

It localises to the cytoplasm. The catalysed reaction is Fe-coproporphyrin III + 2 H(+) = coproporphyrin III + Fe(2+). It participates in porphyrin-containing compound metabolism; protoheme biosynthesis. Involved in coproporphyrin-dependent heme b biosynthesis. Catalyzes the insertion of ferrous iron into coproporphyrin III to form Fe-coproporphyrin III. The chain is Coproporphyrin III ferrochelatase 2 from Bacillus cereus (strain ZK / E33L).